We begin with the raw amino-acid sequence, 227 residues long: Cytochrome c oxidase subunit 2 (227 aa).

The Mitochondrial intermembrane portion of the chain corresponds to 1-14 (MAYPLQLGLQDATS). A helical membrane pass occupies residues 15-45 (PIMEELMNFHDHTLMIVFLISSLVLYIISLM). The Mitochondrial matrix segment spans residues 46 to 59 (LTTKLTHTSTMDAQ). The chain crosses the membrane as a helical span at residues 60-87 (EVETIWTILPAVILIMIALPSLRILYMM). Over 88–227 (DEINNPVLTV…HFENWSASMI (140 aa)) the chain is Mitochondrial intermembrane. 6 residues coordinate Cu cation: His-161, Cys-196, Glu-198, Cys-200, His-204, and Met-207. Glu-198 provides a ligand contact to Mg(2+).

Belongs to the cytochrome c oxidase subunit 2 family. Component of the cytochrome c oxidase (complex IV, CIV), a multisubunit enzyme composed of 14 subunits. The complex is composed of a catalytic core of 3 subunits MT-CO1, MT-CO2 and MT-CO3, encoded in the mitochondrial DNA, and 11 supernumerary subunits COX4I, COX5A, COX5B, COX6A, COX6B, COX6C, COX7A, COX7B, COX7C, COX8 and NDUFA4, which are encoded in the nuclear genome. The complex exists as a monomer or a dimer and forms supercomplexes (SCs) in the inner mitochondrial membrane with NADH-ubiquinone oxidoreductase (complex I, CI) and ubiquinol-cytochrome c oxidoreductase (cytochrome b-c1 complex, complex III, CIII), resulting in different assemblies (supercomplex SCI(1)III(2)IV(1) and megacomplex MCI(2)III(2)IV(2)). Found in a complex with TMEM177, COA6, COX18, COX20, SCO1 and SCO2. Interacts with TMEM177 in a COX20-dependent manner. Interacts with COX20. Interacts with COX16. Cu cation is required as a cofactor.

The protein localises to the mitochondrion inner membrane. The enzyme catalyses 4 Fe(II)-[cytochrome c] + O2 + 8 H(+)(in) = 4 Fe(III)-[cytochrome c] + 2 H2O + 4 H(+)(out). Component of the cytochrome c oxidase, the last enzyme in the mitochondrial electron transport chain which drives oxidative phosphorylation. The respiratory chain contains 3 multisubunit complexes succinate dehydrogenase (complex II, CII), ubiquinol-cytochrome c oxidoreductase (cytochrome b-c1 complex, complex III, CIII) and cytochrome c oxidase (complex IV, CIV), that cooperate to transfer electrons derived from NADH and succinate to molecular oxygen, creating an electrochemical gradient over the inner membrane that drives transmembrane transport and the ATP synthase. Cytochrome c oxidase is the component of the respiratory chain that catalyzes the reduction of oxygen to water. Electrons originating from reduced cytochrome c in the intermembrane space (IMS) are transferred via the dinuclear copper A center (CU(A)) of subunit 2 and heme A of subunit 1 to the active site in subunit 1, a binuclear center (BNC) formed by heme A3 and copper B (CU(B)). The BNC reduces molecular oxygen to 2 water molecules using 4 electrons from cytochrome c in the IMS and 4 protons from the mitochondrial matrix. The chain is Cytochrome c oxidase subunit 2 (MT-CO2) from Zelotomys hildegardeae (Hildegarde's broad-headed mouse).